The chain runs to 423 residues: TPR repeat-containing protein YpiA (423 aa).

9 TPR repeats span residues 33–66, 67–100, 135–168, 171–204, 238–271, 272–305, 306–339, 340–373, and 374–407; these read DEDK…YPNE, TELT…DPSY, PVID…QSEI, VNVH…NPDP, TSLY…DEYN, KELF…DPGF, VEAL…GEED, PKYN…YRED, and RDFL…DGAN.

As to quaternary structure, interacts with the RNA polymerase core.

The protein is TPR repeat-containing protein YpiA (ypiA) of Bacillus subtilis (strain 168).